The following is a 454-amino-acid chain: MSLCLWKQCLDRLQSELPSTEFSMWIRSLKAKLNNNILEIYAPNQFILDWVKDKYLIHFKKILQDFCGSNSPFIKFKVYQTSKEKKFKKNILQKIQNLNAKPIWDKIPIFKKSSHRSNINKKHSFENFIEGKSNQLARAAASQVAKNPGNSYNPLFLYGGTGLGKTHLLHAIGNGILAYKYNVKIIYMHSERFVQDMVKALQNNAIEKFKLYYRSVDALLIDDIQFFAHKERSQEEFFHTFNALLEGNQQIILTSDRYPKEINGVEDRLKSRFGWGLTVAIDPPELETRVAILIKKADENNIVLSDEVAFFIAKHLRSNVRELEGALNRVIVNANFTHRSITVEFVREALRDILALQEKLVTIANIQKTVAEYYKIKVADLLSRRRSRSVARPRQMAMAMAKELTNHSLPEIGDAFSGRDHTTVLHACRKIEQLRKENHDIKEDFSNLIRTLSV.

The segment at 1–79 (MSLCLWKQCL…NSPFIKFKVY (79 aa)) is domain I, interacts with DnaA modulators. A domain II region spans residues 79–117 (YQTSKEKKFKKNILQKIQNLNAKPIWDKIPIFKKSSHRS). The interval 118–334 (NINKKHSFEN…GALNRVIVNA (217 aa)) is domain III, AAA+ region. G162, G164, K165, and T166 together coordinate ATP. A domain IV, binds dsDNA region spans residues 335–454 (NFTHRSITVE…FSNLIRTLSV (120 aa)).

This sequence belongs to the DnaA family. As to quaternary structure, oligomerizes as a right-handed, spiral filament on DNA at oriC.

It localises to the cytoplasm. Plays an essential role in the initiation and regulation of chromosomal replication. ATP-DnaA binds to the origin of replication (oriC) to initiate formation of the DNA replication initiation complex once per cell cycle. Binds the DnaA box (a 9 base pair repeat at the origin) and separates the double-stranded (ds)DNA. Forms a right-handed helical filament on oriC DNA; dsDNA binds to the exterior of the filament while single-stranded (ss)DNA is stabiized in the filament's interior. The ATP-DnaA-oriC complex binds and stabilizes one strand of the AT-rich DNA unwinding element (DUE), permitting loading of DNA polymerase. After initiation quickly degrades to an ADP-DnaA complex that is not apt for DNA replication. Binds acidic phospholipids. This Buchnera aphidicola subsp. Schizaphis graminum (strain Sg) protein is Chromosomal replication initiator protein DnaA.